The chain runs to 497 residues: Keratin, type II cytoskeletal 8 (497 aa).

The tract at residues 2–108 (TSYQRTVTVR…DPRIGQVRLE (107 aa)) is head. Positions 109–149 (EKEQIKTLNNQFAGFIDKVRYLEQQNKLLETKWQLLQNQTT) are coil 1A. The region spanning 109–421 (EKEQIKTLNN…KLLEGEESRL (313 aa)) is the IF rod domain. The interval 145–162 (QNQTTPSRSNLDSMFEAY) is linker 1. The tract at residues 163–254 (ISNLRRQLDT…QIYDEEIREL (92 aa)) is coil 1B. The tract at residues 255–278 (QTQIQDTSVIVQMDNNRQLDLDNI) is linker 12. The segment at 279–417 (IAEVRAQYED…ATYRKLLEGE (139 aa)) is coil 2. Residues 418-497 (ESRLASGIQA…VSERSNIVKE (80 aa)) are tail.

This sequence belongs to the intermediate filament family. Heterotetramer of two type I and two type II keratins. Keratin-8 associates with keratin-18. Expressed in skin.

It is found in the cytoplasm. Its subcellular location is the nucleus. The protein localises to the nucleoplasm. It localises to the nucleus matrix. In terms of biological role, together with KRT19, helps to link the contractile apparatus to dystrophin at the costameres of striated muscle. The chain is Keratin, type II cytoskeletal 8 from Protopterus aethiopicus (Marbled lungfish).